A 595-amino-acid polypeptide reads, in one-letter code: Alginate biosynthesis sensor protein KinB (595 aa).

At 1–12 (MSMPLPMKLRTR) the chain is on the cytoplasmic side. The chain crosses the membrane as a helical span at residues 13–33 (LFLSISALITVSLFGLLLGLF). Residues 34–167 (SVMQLGRAQE…SDAETSARHR (134 aa)) lie on the Periplasmic side of the membrane. A helical transmembrane segment spans residues 168–188 (AYLVAGLLGLVGVAILLIGFV). Residues 189–595 (TAHSIARRFG…GARFYMLLPV (407 aa)) lie on the Cytoplasmic side of the membrane. Residues 195-247 (RRFGAPIETLARAADRIGEGDFDVTLPMTNVAEVGQLTRRFGLMAEALRQYRK) form the HAMP domain. A PAS domain is found at 258-323 (RRLQAVLDSI…AVEKALLGEV (66 aa)). The PAC domain occupies 327-369 (AMPDLVVDVAGESRLLAWSLYPVTHPGGHSVGAVLVVRDVTEQ). Residues 382–595 (RASHELRTPV…GARFYMLLPV (214 aa)) form the Histidine kinase domain. Histidine 385 is modified (phosphohistidine; by autocatalysis).

Autophosphorylated.

It localises to the cell inner membrane. It catalyses the reaction ATP + protein L-histidine = ADP + protein N-phospho-L-histidine.. In terms of biological role, member of the two-component regulatory system AlgB/KinB involved in regulation of alginate biosynthesis genes. KinB functions as a membrane-associated protein kinase that phosphorylates AlgB, probably in response to environmental signals. The polypeptide is Alginate biosynthesis sensor protein KinB (kinB) (Pseudomonas aeruginosa).